We begin with the raw amino-acid sequence, 382 residues long: Flap endonuclease 1 (382 aa).

The tract at residues 1 to 105 (MGIKGLNAII…HELTKRSSRR (105 aa)) is N-domain. Residue aspartate 34 participates in Mg(2+) binding. 2 residues coordinate DNA: arginine 47 and arginine 71. Mg(2+) contacts are provided by aspartate 87, glutamate 156, glutamate 158, aspartate 177, and aspartate 179. Residues 120-251 (EKMKQERRLV…VTALKLIKTH (132 aa)) are I-domain. A DNA-binding site is contributed by glutamate 156. Residues glycine 229 and aspartate 231 each contribute to the DNA site. Aspartate 231 serves as a coordination point for Mg(2+). An interaction with PCNA region spans residues 339–347 (IQGRLDGFF). Residues 358 to 382 (AAAAKRAQENKKLNKNKNKVTKGRR) form a disordered region. Basic residues predominate over residues 370–382 (LNKNKNKVTKGRR).

The protein belongs to the XPG/RAD2 endonuclease family. FEN1 subfamily. In terms of assembly, interacts with PCNA. Three molecules of RAD27 bind to one PCNA trimer with each molecule binding to one PCNA monomer. PCNA stimulates the nuclease activity without altering cleavage specificity. Requires Mg(2+) as cofactor. Phosphorylated. Phosphorylation upon DNA damage induces relocalization to the nuclear plasma.

It is found in the nucleus. It localises to the nucleolus. The protein resides in the nucleoplasm. Its subcellular location is the mitochondrion. Its function is as follows. Structure-specific nuclease with 5'-flap endonuclease and 5'-3' exonuclease activities involved in DNA replication and repair. During DNA replication, cleaves the 5'-overhanging flap structure that is generated by displacement synthesis when DNA polymerase encounters the 5'-end of a downstream Okazaki fragment. It enters the flap from the 5'-end and then tracks to cleave the flap base, leaving a nick for ligation. Also involved in the long patch base excision repair (LP-BER) pathway, by cleaving within the apurinic/apyrimidinic (AP) site-terminated flap. Acts as a genome stabilization factor that prevents flaps from equilibrating into structures that lead to duplications and deletions. Also possesses 5'-3' exonuclease activity on nicked or gapped double-stranded DNA, and exhibits RNase H activity. Also involved in replication and repair of rDNA and in repairing mitochondrial DNA. The protein is Flap endonuclease 1 of Saccharomyces cerevisiae (strain YJM789) (Baker's yeast).